A 120-amino-acid chain; its full sequence is MKRTGPTDPNLRRLIRYLRKKSNEYGVKIWKDVAWRLERPRRQRAEVNVSKINRYANDGEMIVVPGSVLGAGKLEKKVIVAAWKFSETARRKIIEAGGEAITIEELIERNPTGSGVRIME.

The protein belongs to the eukaryotic ribosomal protein eL18 family. As to quaternary structure, part of the 50S ribosomal subunit.

The sequence is that of Large ribosomal subunit protein eL18 from Pyrococcus furiosus (strain ATCC 43587 / DSM 3638 / JCM 8422 / Vc1).